We begin with the raw amino-acid sequence, 55 residues long: MASSTDVRPKITLACETCKHRNYITKKNRRNDPDRLEIKKFCPNCGSHQPHKESR.

Belongs to the bacterial ribosomal protein bL33 family.

The protein is Large ribosomal subunit protein bL33B of Mycobacteroides abscessus (strain ATCC 19977 / DSM 44196 / CCUG 20993 / CIP 104536 / JCM 13569 / NCTC 13031 / TMC 1543 / L948) (Mycobacterium abscessus).